The primary structure comprises 270 residues: Feruloyl esterase C (270 aa).

The signal sequence occupies residues 1-21; the sequence is MLRAVLLPTLLAFGAFTPVHG.

This sequence belongs to the faeC family.

It is found in the secreted. It carries out the reaction feruloyl-polysaccharide + H2O = ferulate + polysaccharide.. Functionally, involved in degradation of plant cell walls. Hydrolyzes the feruloyl-arabinose ester bond in arabinoxylans, and the feruloyl-galactose ester bond in pectin. Active against paranitrophenyl-acetate, methyl ferulate and wheat arabinoxylan. This Emericella nidulans (strain FGSC A4 / ATCC 38163 / CBS 112.46 / NRRL 194 / M139) (Aspergillus nidulans) protein is Feruloyl esterase C (faeC).